A 341-amino-acid polypeptide reads, in one-letter code: Ferredoxin--NADP reductase (341 aa).

FAD is bound by residues E36, Q44, F49, V89, F123, D289, and T329.

It belongs to the ferredoxin--NADP reductase type 2 family. Homodimer. FAD is required as a cofactor.

It carries out the reaction 2 reduced [2Fe-2S]-[ferredoxin] + NADP(+) + H(+) = 2 oxidized [2Fe-2S]-[ferredoxin] + NADPH. In Ligilactobacillus salivarius (strain UCC118) (Lactobacillus salivarius), this protein is Ferredoxin--NADP reductase.